The following is an 88-amino-acid chain: Sec-independent protein translocase protein TatA (88 aa).

A helical membrane pass occupies residues 1–21 (MGGISITQLLIIASIVVVLFG). A disordered region spans residues 39–88 (FKKSMSEDDNTTSTSSDKSSQDADFTAPPIEPKANLACPDEAKNKDKEHV). Low complexity predominate over residues 49–62 (TTSTSSDKSSQDAD). The segment covering 78-88 (DEAKNKDKEHV) has biased composition (basic and acidic residues).

Belongs to the TatA/E family. The Tat system comprises two distinct complexes: a TatABC complex, containing multiple copies of TatA, TatB and TatC subunits, and a separate TatA complex, containing only TatA subunits. Substrates initially bind to the TatABC complex, which probably triggers association of the separate TatA complex to form the active translocon.

It localises to the cell inner membrane. Part of the twin-arginine translocation (Tat) system that transports large folded proteins containing a characteristic twin-arginine motif in their signal peptide across membranes. TatA could form the protein-conducting channel of the Tat system. The protein is Sec-independent protein translocase protein TatA of Sodalis glossinidius (strain morsitans).